The sequence spans 215 residues: Negative modulator of initiation of replication (215 aa).

The tract at residues 71–93 (AETPKPSSEQEIRTPARKQSTQS) is disordered. An interaction with DNA region spans residues 181–187 (NTNSGRK).

The protein belongs to the SeqA family. In terms of assembly, homodimer. Polymerizes to form helical filaments.

It is found in the cytoplasm. Its function is as follows. Negative regulator of replication initiation, which contributes to regulation of DNA replication and ensures that replication initiation occurs exactly once per chromosome per cell cycle. Binds to pairs of hemimethylated GATC sequences in the oriC region, thus preventing assembly of replication proteins and re-initiation at newly replicated origins. Repression is relieved when the region becomes fully methylated. The polypeptide is Negative modulator of initiation of replication (Mannheimia succiniciproducens (strain KCTC 0769BP / MBEL55E)).